A 141-amino-acid polypeptide reads, in one-letter code: Large ribosomal subunit protein uL11 (141 aa).

It belongs to the universal ribosomal protein uL11 family. In terms of assembly, part of the ribosomal stalk of the 50S ribosomal subunit. Interacts with L10 and the large rRNA to form the base of the stalk. L10 forms an elongated spine to which L12 dimers bind in a sequential fashion forming a multimeric L10(L12)X complex. In terms of processing, one or more lysine residues are methylated.

Forms part of the ribosomal stalk which helps the ribosome interact with GTP-bound translation factors. This chain is Large ribosomal subunit protein uL11, found in Cyanothece sp. (strain PCC 7425 / ATCC 29141).